Reading from the N-terminus, the 256-residue chain is Ribonuclease 3 (256 aa).

The RNase III domain occupies 3–125; the sequence is LDALQQRLGY…IVGAVFLDAG (123 aa). Glutamate 38 provides a ligand contact to Mg(2+). Aspartate 42 is an active-site residue. Residues aspartate 111 and glutamate 114 each coordinate Mg(2+). Glutamate 114 is an active-site residue. In terms of domain architecture, DRBM spans 152 to 222; sequence DAKTLLQEYL…AKLALDEVQK (71 aa). The tract at residues 230 to 256 is disordered; the sequence is RSRAERTGKTRKQPVPQDPQLSLRLKE.

This sequence belongs to the ribonuclease III family. Homodimer. The cofactor is Mg(2+).

It localises to the cytoplasm. It catalyses the reaction Endonucleolytic cleavage to 5'-phosphomonoester.. Its function is as follows. Digests double-stranded RNA. Involved in the processing of primary rRNA transcript to yield the immediate precursors to the large and small rRNAs (23S and 16S). Processes some mRNAs, and tRNAs when they are encoded in the rRNA operon. Processes pre-crRNA and tracrRNA of type II CRISPR loci if present in the organism. This Cupriavidus necator (strain ATCC 17699 / DSM 428 / KCTC 22496 / NCIMB 10442 / H16 / Stanier 337) (Ralstonia eutropha) protein is Ribonuclease 3.